Reading from the N-terminus, the 764-residue chain is Zinc finger CCCH domain-containing protein 24 (764 aa).

ANK repeat units lie at residues 108–138 (EHRT…DVNR) and 143–175 (DGTT…DADA). The C3H1-type zinc-finger motif lies at 321 to 348 (HYSCVPCPDFRKGVCRRGDMCEYAHGVF). Disordered stretches follow at residues 616 to 665 (QREK…DWGV) and 698 to 732 (KESP…EGPS). Residues 640–659 (SGVVGSPLSSSWSKWGSPSG) are compositionally biased toward low complexity. Over residues 705-716 (QVTTAESINSVG) the composition is skewed to polar residues.

In Oryza sativa subsp. japonica (Rice), this protein is Zinc finger CCCH domain-containing protein 24.